Here is a 341-residue protein sequence, read N- to C-terminus: Mitochondrial glutathione transporter SLC25A40 (341 aa).

Solcar repeat units lie at residues 14–132 (ITPS…LRDI), 140–224 (RAEI…VKQS), and 234–328 (PTFA…GKSF). Transmembrane regions (helical) follow at residues 20–40 (MIASSMGALLTSFFVTPLDVV), 104–124 (LWSGLPPTLVMAVPATVIYFT), 143–163 (IASLVAGATARLWSATLISPL), 200–221 (WGPTVLRDVPFSALYWHNYELV), 236–256 (FAISFTAGAVSGSIAAIVTLP), and 299–319 (GLFAGLIPRLIKVAPACAIMI).

The protein belongs to the mitochondrial carrier (TC 2.A.29) family.

Its subcellular location is the mitochondrion inner membrane. The enzyme catalyses glutathione(in) = glutathione(out). Functionally, probable mitochondrial transporter required for glutathione import into mitochondria. Glutathione, which plays key roles in oxidative metabolism, is produced exclusively in the cytosol and is imported in many organelles. Mitochondrial glutathione is required for the activity and stability of proteins containing iron-sulfur clusters. This chain is Mitochondrial glutathione transporter SLC25A40, found in Xenopus tropicalis (Western clawed frog).